A 125-amino-acid polypeptide reads, in one-letter code: Small ribosomal subunit protein uS13 (125 aa).

The disordered stretch occupies residues 92-125 (RRSLPVRGQRTQTNARTRKGKRKTVAGKKKATKK). Residues 107 to 125 (RTRKGKRKTVAGKKKATKK) show a composition bias toward basic residues.

The protein belongs to the universal ribosomal protein uS13 family. In terms of assembly, part of the 30S ribosomal subunit. Forms a loose heterodimer with protein S19. Forms two bridges to the 50S subunit in the 70S ribosome.

Its function is as follows. Located at the top of the head of the 30S subunit, it contacts several helices of the 16S rRNA. In the 70S ribosome it contacts the 23S rRNA (bridge B1a) and protein L5 of the 50S subunit (bridge B1b), connecting the 2 subunits; these bridges are implicated in subunit movement. Contacts the tRNAs in the A and P-sites. This chain is Small ribosomal subunit protein uS13, found in Chlorobium phaeobacteroides (strain DSM 266 / SMG 266 / 2430).